The primary structure comprises 1404 residues: DNA-directed RNA polymerase subunit beta' (1404 aa).

Cys70, Cys72, Cys85, and Cys88 together coordinate Zn(2+). Mg(2+) contacts are provided by Asp460, Asp462, and Asp464. Residues Cys825, Cys899, Cys906, and Cys909 each contribute to the Zn(2+) site.

This sequence belongs to the RNA polymerase beta' chain family. The RNAP catalytic core consists of 2 alpha, 1 beta, 1 beta' and 1 omega subunit. When a sigma factor is associated with the core the holoenzyme is formed, which can initiate transcription. It depends on Mg(2+) as a cofactor. The cofactor is Zn(2+).

The catalysed reaction is RNA(n) + a ribonucleoside 5'-triphosphate = RNA(n+1) + diphosphate. Functionally, DNA-dependent RNA polymerase catalyzes the transcription of DNA into RNA using the four ribonucleoside triphosphates as substrates. This Nitrosomonas eutropha (strain DSM 101675 / C91 / Nm57) protein is DNA-directed RNA polymerase subunit beta'.